A 527-amino-acid chain; its full sequence is Formate--tetrahydrofolate ligase (527 aa).

An ATP-binding site is contributed by 53 to 60; that stretch reads TSSGEGKT.

It belongs to the formate--tetrahydrofolate ligase family.

It carries out the reaction (6S)-5,6,7,8-tetrahydrofolate + formate + ATP = (6R)-10-formyltetrahydrofolate + ADP + phosphate. The protein operates within one-carbon metabolism; tetrahydrofolate interconversion. The chain is Formate--tetrahydrofolate ligase from Acholeplasma laidlawii (strain PG-8A).